A 444-amino-acid polypeptide reads, in one-letter code: Glutamyl-tRNA reductase (444 aa).

Substrate is bound by residues 49–52 (TCNR), serine 109, 114–116 (ETQ), and glutamine 120. Catalysis depends on cysteine 50, which acts as the Nucleophile. 189–194 (GAGKMG) provides a ligand contact to NADP(+).

Belongs to the glutamyl-tRNA reductase family. As to quaternary structure, homodimer.

The catalysed reaction is (S)-4-amino-5-oxopentanoate + tRNA(Glu) + NADP(+) = L-glutamyl-tRNA(Glu) + NADPH + H(+). It participates in porphyrin-containing compound metabolism; protoporphyrin-IX biosynthesis; 5-aminolevulinate from L-glutamyl-tRNA(Glu): step 1/2. Catalyzes the NADPH-dependent reduction of glutamyl-tRNA(Glu) to glutamate 1-semialdehyde (GSA). This Bacillus cereus (strain 03BB102) protein is Glutamyl-tRNA reductase.